Consider the following 31-residue polypeptide: DRCIWPKEGFSIYWNIPTHFCHNFGVYFKEL.

It belongs to the glycosyl hydrolase 56 family. Contains 2 disulfide bonds. In terms of processing, N-glycosylated on at least two Asn residues by identical heptasaccharide units composed of Man, GlcNAc, and Fuc residues in the molar ration of 3:2:2. As to expression, expressed by the venom gland.

It localises to the secreted. It carries out the reaction Random hydrolysis of (1-&gt;4)-linkages between N-acetyl-beta-D-glucosamine and D-glucuronate residues in hyaluronate.. Its function is as follows. Hydrolyzes high molecular weight hyaluronic acid to produce small oligosaccharides. This chain is Hyaluronidase, found in Vespula maculifrons (Eastern yellow jacket).